Consider the following 187-residue polypeptide: Probable chorismate pyruvate-lyase (187 aa).

Substrate is bound by residues R80, L117, and E176.

This sequence belongs to the UbiC family.

Its subcellular location is the cytoplasm. The catalysed reaction is chorismate = 4-hydroxybenzoate + pyruvate. The protein operates within cofactor biosynthesis; ubiquinone biosynthesis. Its function is as follows. Removes the pyruvyl group from chorismate, with concomitant aromatization of the ring, to provide 4-hydroxybenzoate (4HB) for the ubiquinone pathway. In Halorhodospira halophila (strain DSM 244 / SL1) (Ectothiorhodospira halophila (strain DSM 244 / SL1)), this protein is Probable chorismate pyruvate-lyase.